A 442-amino-acid chain; its full sequence is 3-isopropylmalate dehydratase large subunit (442 aa).

Residues X347, C407, and C410 each contribute to the [4Fe-4S] cluster site.

Belongs to the aconitase/IPM isomerase family. LeuC type 1 subfamily. Heterodimer of LeuC and LeuD. [4Fe-4S] cluster is required as a cofactor.

The catalysed reaction is (2R,3S)-3-isopropylmalate = (2S)-2-isopropylmalate. Its pathway is amino-acid biosynthesis; L-leucine biosynthesis; L-leucine from 3-methyl-2-oxobutanoate: step 2/4. Catalyzes the isomerization between 2-isopropylmalate and 3-isopropylmalate, via the formation of 2-isopropylmaleate. In Buchnera aphidicola subsp. Macrosiphoniella ludovicianae, this protein is 3-isopropylmalate dehydratase large subunit.